A 211-amino-acid polypeptide reads, in one-letter code: MRAIRMLLVSALTLGSLSATLSAHAGEQDVQRLTQLLEKSQTIEANFSQLTLDAGGTSLQETTGKMTVKRPGLFYWHTDAPQEQVVVSDGKNVTLWDPDLEQATIKKLDVRLNQTPALLLSGDVSKISQSFDITSKEQGEVMDFTLKPTTKDTLFDSLRVSFRRGLINDMQLIDSVGQRTNILFNGVKANQAVPDSTFKFDIPKGADVIKE.

An N-terminal signal peptide occupies residues 1–25 (MRAIRMLLVSALTLGSLSATLSAHA).

It belongs to the LolA family. Monomer.

The protein localises to the periplasm. Participates in the translocation of lipoproteins from the inner membrane to the outer membrane. Only forms a complex with a lipoprotein if the residue after the N-terminal Cys is not an aspartate (The Asp acts as a targeting signal to indicate that the lipoprotein should stay in the inner membrane). This is Outer-membrane lipoprotein carrier protein from Pseudomonas putida (strain W619).